Reading from the N-terminus, the 425-residue chain is Nuclear hormone receptor family member nhr-13 (425 aa).

The nuclear receptor DNA-binding region spans P5–S83. 2 NR C4-type zinc fingers span residues C11–C30 and C46–C71. Residues V108–N148 are disordered. The segment covering E113 to N130 has biased composition (acidic residues). The segment covering E131–E142 has biased composition (low complexity). The NR LBD domain maps to E147 to W414.

The protein belongs to the nuclear hormone receptor family. As to quaternary structure, may interact with nuclear hormone receptor nhr-49.

It is found in the nucleus. Orphan nuclear receptor. Involved in regulating fatty acid desaturase genes, acting in concert with nuclear hormone receptor nhr-49. This Caenorhabditis elegans protein is Nuclear hormone receptor family member nhr-13 (nhr-13).